We begin with the raw amino-acid sequence, 123 residues long: Immunoglobulin lambda variable 5-45 (123 aa).

The signal sequence occupies residues 1–19 (MAWTPLLLLFLSHCTGSLS). The framework-1 stretch occupies residues 20–44 (QAVLTQPSSLSASPGASASLTCTLC). Residues 20 to 123 (QAVLTQPSSL…YCMIWHSSAS (104 aa)) enclose the Ig-like domain. Cysteine 41 and cysteine 115 form a disulfide bridge. Residues 45–53 (SGINVGTYR) are complementarity-determining-1. Residues 54-70 (IYWYQQKPGSPPQYLLR) are framework-2. The segment at 68-92 (LLRYKSDSDKQQGSGVPSRFSGSKD) is disordered. A complementarity-determining-2 region spans residues 71 to 77 (YKSDSDK). The segment covering 78 to 92 (QQGSGVPSRFSGSKD) has biased composition (polar residues). Residues 78–115 (QQGSGVPSRFSGSKDASANAGILLISGLQSEDEADYYC) are framework-3. A complementarity-determining-3 region spans residues 116 to 123 (MIWHSSAS).

In terms of assembly, immunoglobulins are composed of two identical heavy chains and two identical light chains; disulfide-linked.

It is found in the secreted. The protein resides in the cell membrane. Functionally, v region of the variable domain of immunoglobulin light chains that participates in the antigen recognition. Immunoglobulins, also known as antibodies, are membrane-bound or secreted glycoproteins produced by B lymphocytes. In the recognition phase of humoral immunity, the membrane-bound immunoglobulins serve as receptors which, upon binding of a specific antigen, trigger the clonal expansion and differentiation of B lymphocytes into immunoglobulins-secreting plasma cells. Secreted immunoglobulins mediate the effector phase of humoral immunity, which results in the elimination of bound antigens. The antigen binding site is formed by the variable domain of one heavy chain, together with that of its associated light chain. Thus, each immunoglobulin has two antigen binding sites with remarkable affinity for a particular antigen. The variable domains are assembled by a process called V-(D)-J rearrangement and can then be subjected to somatic hypermutations which, after exposure to antigen and selection, allow affinity maturation for a particular antigen. In Homo sapiens (Human), this protein is Immunoglobulin lambda variable 5-45.